The following is a 382-amino-acid chain: Chaperone protein DnaJ (382 aa).

A J domain is found at 5–70 (DYYDLLGLSK…DKRAAYDRYG (66 aa)). A CR-type zinc finger spans residues 138–216 (GTKVPINYVT…CSGSGRVRDE (79 aa)). Cys-151, Cys-154, Cys-168, Cys-171, Cys-190, Cys-193, Cys-204, and Cys-207 together coordinate Zn(2+). 4 CXXCXGXG motif repeats span residues 151-158 (CSSCSGSG), 168-175 (CNTCHGAG), 190-197 (CHVCNGEG), and 204-211 (CKKCSGSG).

It belongs to the DnaJ family. As to quaternary structure, homodimer. The cofactor is Zn(2+).

The protein localises to the cytoplasm. In terms of biological role, participates actively in the response to hyperosmotic and heat shock by preventing the aggregation of stress-denatured proteins and by disaggregating proteins, also in an autonomous, DnaK-independent fashion. Unfolded proteins bind initially to DnaJ; upon interaction with the DnaJ-bound protein, DnaK hydrolyzes its bound ATP, resulting in the formation of a stable complex. GrpE releases ADP from DnaK; ATP binding to DnaK triggers the release of the substrate protein, thus completing the reaction cycle. Several rounds of ATP-dependent interactions between DnaJ, DnaK and GrpE are required for fully efficient folding. Also involved, together with DnaK and GrpE, in the DNA replication of plasmids through activation of initiation proteins. This chain is Chaperone protein DnaJ, found in Ehrlichia ruminantium (strain Gardel).